The chain runs to 329 residues: DNA-directed RNA polymerase subunit alpha (329 aa).

The alpha N-terminal domain (alpha-NTD) stretch occupies residues Met1–Arg234. The tract at residues Phe248–Leu329 is alpha C-terminal domain (alpha-CTD).

Belongs to the RNA polymerase alpha chain family. As to quaternary structure, homodimer. The RNAP catalytic core consists of 2 alpha, 1 beta, 1 beta' and 1 omega subunit. When a sigma factor is associated with the core the holoenzyme is formed, which can initiate transcription.

The enzyme catalyses RNA(n) + a ribonucleoside 5'-triphosphate = RNA(n+1) + diphosphate. In terms of biological role, DNA-dependent RNA polymerase catalyzes the transcription of DNA into RNA using the four ribonucleoside triphosphates as substrates. This chain is DNA-directed RNA polymerase subunit alpha, found in Shewanella violacea (strain JCM 10179 / CIP 106290 / LMG 19151 / DSS12).